The sequence spans 318 residues: Cis-3-alkyl-4-alkyloxetan-2-one decarboxylase (318 aa).

An AB hydrolase-1 domain is found at 30 to 275 (PVVMVHGNPS…ADCGHYILED (246 aa)).

The protein belongs to the AB hydrolase superfamily.

The catalysed reaction is a cis-3-alkyl-4-alkyloxetan-2-one = a cis-alkene + CO2. Involved in olefin biosynthesis. Catalyzes the elimination of carbon dioxide from beta-lactones to form the final olefin product. The S.oneidensis oleABCD genes produce 3,6,9,12,15,19,22,25,28-hentriacontanonaene, which may aid the cells in adapting to a sudden drop in temperature. This Shewanella oneidensis (strain ATCC 700550 / JCM 31522 / CIP 106686 / LMG 19005 / NCIMB 14063 / MR-1) protein is Cis-3-alkyl-4-alkyloxetan-2-one decarboxylase.